A 71-amino-acid polypeptide reads, in one-letter code: Exodeoxyribonuclease 7 small subunit (71 aa).

The protein belongs to the XseB family. As to quaternary structure, heterooligomer composed of large and small subunits.

Its subcellular location is the cytoplasm. It catalyses the reaction Exonucleolytic cleavage in either 5'- to 3'- or 3'- to 5'-direction to yield nucleoside 5'-phosphates.. Bidirectionally degrades single-stranded DNA into large acid-insoluble oligonucleotides, which are then degraded further into small acid-soluble oligonucleotides. This chain is Exodeoxyribonuclease 7 small subunit, found in Clostridium botulinum (strain 657 / Type Ba4).